Consider the following 428-residue polypeptide: Glutamine synthetase, chloroplastic (428 aa).

The transit peptide at 1–48 directs the protein to the chloroplast; it reads MAQAVVPAMQCQVGAVRARPAAAAAAAGGRVWGVRRTGRGTSGFRVMA. The 81-residue stretch at 75 to 155 folds into the GS beta-grasp domain; that stretch reads IIAEYIWVGG…VMCDTYTPAG (81 aa). A disordered region spans residues 95-120; the sequence is TISKPVEDPSELPKWNYDGSSTGQAP. In terms of domain architecture, GS catalytic spans 159-428; sequence PTNKRNRAAQ…LAAKKLALKV (270 aa).

Belongs to the glutamine synthetase family. Homooctamer.

The protein resides in the plastid. Its subcellular location is the chloroplast. It catalyses the reaction L-glutamate + NH4(+) + ATP = L-glutamine + ADP + phosphate + H(+). In terms of biological role, light-modulated chloroplastic glutamine synthetase, encoded by a nuclear gene and expressed primarily in leaves, and which is responsible for the reassimilation of the ammonia generated by photorespiration. The protein is Glutamine synthetase, chloroplastic of Oryza sativa subsp. japonica (Rice).